The following is a 181-amino-acid chain: Translationally-controlled tumor protein homolog (181 aa).

The 181-residue stretch at 1-181 (MLIYKDIFTD…VKEAIIEEKC (181 aa)) folds into the TCTP domain.

Belongs to the TCTP family.

The protein resides in the cytoplasm. In terms of biological role, involved in calcium binding and microtubule stabilization. This Caenorhabditis elegans protein is Translationally-controlled tumor protein homolog (tct-1).